The following is a 342-amino-acid chain: tRNA N6-adenosine threonylcarbamoyltransferase (342 aa).

Positions 112 and 116 each coordinate Fe cation. Substrate-binding positions include 134-138 (IVSGG), D167, G180, and N278. D306 is a binding site for Fe cation.

Belongs to the KAE1 / TsaD family. Requires Fe(2+) as cofactor.

Its subcellular location is the cytoplasm. It carries out the reaction L-threonylcarbamoyladenylate + adenosine(37) in tRNA = N(6)-L-threonylcarbamoyladenosine(37) in tRNA + AMP + H(+). Its function is as follows. Required for the formation of a threonylcarbamoyl group on adenosine at position 37 (t(6)A37) in tRNAs that read codons beginning with adenine. Is involved in the transfer of the threonylcarbamoyl moiety of threonylcarbamoyl-AMP (TC-AMP) to the N6 group of A37, together with TsaE and TsaB. TsaD likely plays a direct catalytic role in this reaction. The polypeptide is tRNA N6-adenosine threonylcarbamoyltransferase (Anaplasma phagocytophilum (strain HZ)).